The sequence spans 117 residues: Large ribosomal subunit protein bL20 (117 aa).

Belongs to the bacterial ribosomal protein bL20 family.

Its function is as follows. Binds directly to 23S ribosomal RNA and is necessary for the in vitro assembly process of the 50S ribosomal subunit. It is not involved in the protein synthesizing functions of that subunit. The chain is Large ribosomal subunit protein bL20 from Nitratidesulfovibrio vulgaris (strain DP4) (Desulfovibrio vulgaris).